The primary structure comprises 275 residues: 3-methyl-2-oxobutanoate hydroxymethyltransferase (275 aa).

2 residues coordinate Mg(2+): Asp44 and Asp83. 3-methyl-2-oxobutanoate-binding positions include 44–45, Asp83, and Lys113; that span reads DS. Residue Glu115 participates in Mg(2+) binding. The active-site Proton acceptor is the Glu182.

Belongs to the PanB family. As to quaternary structure, homodecamer; pentamer of dimers. Mg(2+) is required as a cofactor.

The protein resides in the cytoplasm. It carries out the reaction 3-methyl-2-oxobutanoate + (6R)-5,10-methylene-5,6,7,8-tetrahydrofolate + H2O = 2-dehydropantoate + (6S)-5,6,7,8-tetrahydrofolate. Its pathway is cofactor biosynthesis; (R)-pantothenate biosynthesis; (R)-pantoate from 3-methyl-2-oxobutanoate: step 1/2. Catalyzes the reversible reaction in which hydroxymethyl group from 5,10-methylenetetrahydrofolate is transferred onto alpha-ketoisovalerate to form ketopantoate. The chain is 3-methyl-2-oxobutanoate hydroxymethyltransferase from Clostridium novyi (strain NT).